A 464-amino-acid chain; its full sequence is Gasdermin-A3 (464 aa).

The segment at 1 to 261 is triggers pyroptosis; it reads MPVFEDVTRA…EEPEEEKLIG (261 aa). 9-13 lines the a cardiolipin pocket; the sequence is RALVR. Beta stranded transmembrane passes span 78–95, 99–120, 164–180, and 184–198; these read NFSF…LVEV, VKVK…TLSV, VTVE…SLPS, and LGLQ…AVTI. Residues 255 to 327 are a coiled coil; sequence EEEKLIGEMH…DKGQKVTLEA (73 aa).

It belongs to the gasdermin family. As to quaternary structure, homooligomer; homooligomeric ring-shaped pore complex containing 18-36 subunits when inserted in the membrane. Cleavage relieves autoinhibition by releasing the N-terminal moiety (Gasdermin-A3, N-terminal) that initiates pyroptosis. In contrast to Gsdma, not cleaved by bacterial effector protein SpeB. Post-translationally, palmitoylated. Highest levels in skin with weak expression in placenta and testis. Not detected in the gastrointestinal tract. In skin, expressed in postnatal hair follicles and epidermis as well as sebaceous gland basal cells.

It is found in the cytoplasm. It localises to the cytosol. The protein resides in the cell membrane. The protein localises to the mitochondrion membrane. With respect to regulation, the full-length protein before cleavage is inactive: intramolecular interactions between N- and C-terminal domains mediate autoinhibition in the absence of activation signal. The intrinsic pyroptosis-inducing activity is carried by the released N-terminal moiety (Gasdermin-A3, N-terminal). Functionally, precursor of a pore-forming protein involved in the transition from catagen to telogen at the end of hair follicle morphogenesis. This form constitutes the precursor of the pore: upon cleavage, the released N-terminal moiety (Gasdermin-A3, N-terminal) binds to membranes and forms pores, triggering pyroptosis. This form acts as a sensor of infection: activation is triggered by cleavage by some bacterial effector protein, which releases the N-terminal moiety (Gasdermin-A3, N-terminal). In terms of biological role, pore-forming protein that causes membrane permeabilization and pyroptosis. Released upon cleavage by some bacterial effector protein, and binds to membrane inner leaflet lipids. Homooligomerizes within the membrane and forms pores of 10-15 nanometers (nm) of inner diameter, allowing the release of mature interleukin-1 (IL1B and IL18) and triggering pyroptosis. Binds to membrane inner leaflet lipids, including bisphosphorylated phosphatidylinositols, such as phosphatidylinositol (4,5)-bisphosphate, as well as phosphatidylinositol (3,4,5)-bisphosphate, and more weakly to monophosphorylated phosphatidylinositols. Also binds to bacterial and mitochondrial lipids, including cardiolipin, and exhibits bactericidal activity. Plays a role in the transition from catagen to telogen at the end of hair follicle morphogenesis, possibly by regulating hair follicle stem cell niche maintenance. Also required for mammary gland development. This is Gasdermin-A3 from Mus musculus (Mouse).